Here is a 496-residue protein sequence, read N- to C-terminus: Sporulation-killing factor biosynthesis protein SkfC (496 aa).

7 helical membrane-spanning segments follow: residues M1 to I21, V224 to M244, T248 to L268, L291 to C311, I331 to L351, L399 to S419, and F443 to V463.

Its subcellular location is the membrane. Required for production of the bacteriocin SkfA. In Bacillus subtilis (strain 168), this protein is Sporulation-killing factor biosynthesis protein SkfC.